A 1358-amino-acid chain; its full sequence is DNA mismatch repair protein Msh6 (1358 aa).

The segment at 1–87 is disordered; that stretch reads MSRQSTLYSF…SSAQAVPPSS (87 aa). Phosphoserine is present on residues S14, S38, and S40. Residues 25–46 are compositionally biased toward low complexity; that stretch reads AEASRQGAAASGASASRGGDAA. K67 is modified (N6-acetyllysine). Over residues 76-87 the composition is skewed to low complexity; sequence ASSSAQAVPPSS. Phosphoserine occurs at positions 91, 137, 200, 219, and 227. The PWWP domain occupies 92 to 154; the sequence is PGDLVWAKME…KRMLKPYTGS (63 aa). The tract at residues 197 to 360 is disordered; sequence DEPSEPEEEE…VSGGGNDSSG (164 aa). 2 stretches are compositionally biased toward acidic residues: residues 198–209 and 219–231; these read EPSEPEEEEETE and SEED…EEEA. Over residues 240–249 the composition is skewed to basic residues; the sequence is RSSRQVKKRR. Phosphoserine occurs at positions 252, 254, 256, and 261. The span at 263 to 273 shows a compositional bias: basic and acidic residues; that stretch reads VEFKPDTKQEG. T269 carries the post-translational modification Phosphothreonine. Phosphoserine occurs at positions 274, 275, 279, and 280. Polar residues predominate over residues 329–351; that stretch reads LSETKSTLSAFSAPQNSESQTHV. A Phosphothreonine modification is found at T487. K503 bears the N6-acetyllysine mark. A phosphoserine mark is found at S827 and S932. At T1007 the chain carries Phosphothreonine. 1132 to 1139 contacts ATP; it reads GPNMGGKS.

The protein belongs to the DNA mismatch repair MutS family. As to quaternary structure, component of the DNA mismatch repair (MMR) complex composed at least of MSH2, MSH3, MSH6, PMS1 and MLH1. Heterodimer consisting of MSH2-MSH6 (MutS alpha). Forms a ternary complex with MutL alpha (MLH1-PMS1). Interacts with MCM9. Part of the BRCA1-associated genome surveillance complex (BASC), which contains BRCA1, MSH2, MSH6, MLH1, ATM, BLM, PMS2 and the RAD50-MRE11-NBS1 protein complex. This association could be a dynamic process changing throughout the cell cycle and within subnuclear domains. Post-translationally, phosphorylated by PRKCZ, which may prevent MutS alpha degradation by the ubiquitin-proteasome pathway.

Its subcellular location is the nucleus. It localises to the chromosome. Its function is as follows. Component of the post-replicative DNA mismatch repair system (MMR). Heterodimerizes with MSH2 to form MutS alpha, which binds to DNA mismatches thereby initiating DNA repair. When bound, MutS alpha bends the DNA helix and shields approximately 20 base pairs, and recognizes single base mismatches and dinucleotide insertion-deletion loops (IDL) in the DNA. After mismatch binding, forms a ternary complex with the MutL alpha heterodimer, which is thought to be responsible for directing the downstream MMR events, including strand discrimination, excision, and resynthesis. ATP binding and hydrolysis play a pivotal role in mismatch repair functions. The ATPase activity associated with MutS alpha regulates binding similar to a molecular switch: mismatched DNA provokes ADP--&gt;ATP exchange, resulting in a discernible conformational transition that converts MutS alpha into a sliding clamp capable of hydrolysis-independent diffusion along the DNA backbone. This transition is crucial for mismatch repair. MutS alpha may also play a role in DNA homologous recombination repair. Recruited on chromatin in G1 and early S phase via its PWWP domain that specifically binds trimethylated 'Lys-36' of histone H3 (H3K36me3): early recruitment to chromatin to be replicated allowing a quick identification of mismatch repair to initiate the DNA mismatch repair reaction. The protein is DNA mismatch repair protein Msh6 of Mus musculus (Mouse).